A 279-amino-acid chain; its full sequence is Expansin-A22 (279 aa).

Residues 1-27 (MKLLEKMIYVEFLMIIMVIWVVPMSYG) form the signal peptide. The Expansin-like EG45 domain occupies 76-186 (QGACGYGNLF…RRIPCSKTGG (111 aa)). In terms of domain architecture, Expansin-like CBD spans 196 to 275 (YFLMVLIYNV…NWGFGQTFDG (80 aa)).

This sequence belongs to the expansin family. Expansin A subfamily.

The protein resides in the secreted. Its subcellular location is the cell wall. It localises to the membrane. Its function is as follows. Causes loosening and extension of plant cell walls by disrupting non-covalent bonding between cellulose microfibrils and matrix glucans. No enzymatic activity has been found. The polypeptide is Expansin-A22 (EXPA22) (Arabidopsis thaliana (Mouse-ear cress)).